Consider the following 358-residue polypeptide: Trans-anol O-methyltransferase 1 (358 aa).

Residues glycine 201, aspartate 224, aspartate 244, methionine 245, and arginine 259 each coordinate S-adenosyl-L-methionine. The Proton acceptor role is filled by histidine 262.

This sequence belongs to the class I-like SAM-binding methyltransferase superfamily. Cation-independent O-methyltransferase family. COMT subfamily. Highly expressed in developing fruits. Expressed at low levels in roots, young leaves, buds and flowers.

The enzyme catalyses (E)-anol + S-adenosyl-L-methionine = (E)-anethole + S-adenosyl-L-homocysteine + H(+). It catalyses the reaction (E)-isoeugenol + S-adenosyl-L-methionine = (E)-isomethyleugenol + S-adenosyl-L-homocysteine + H(+). It functions in the pathway aromatic compound metabolism; phenylpropanoid biosynthesis. With respect to regulation, inhibited by zinc and copper. Its function is as follows. Phenylpropene O-methyltransferase that catalyzes the conversion of trans-anol to trans-anethole and isoeugenol to isomethyleugenol. Phenylpropenes are the primary constituents of various essential plant oils. They are produced as antimicrobial and antianimal compounds, or as floral attractants of pollinators. The sequence is that of Trans-anol O-methyltransferase 1 (AIMT1) from Pimpinella anisum (Anise).